The following is a 292-amino-acid chain: NAD kinase (292 aa).

D73 acts as the Proton acceptor in catalysis. Residues 73 to 74 (DG), 147 to 148 (NE), H158, R175, D177, 188 to 193 (TAYSLS), and Q247 each bind NAD(+).

Belongs to the NAD kinase family. A divalent metal cation is required as a cofactor.

The protein resides in the cytoplasm. The catalysed reaction is NAD(+) + ATP = ADP + NADP(+) + H(+). Its function is as follows. Involved in the regulation of the intracellular balance of NAD and NADP, and is a key enzyme in the biosynthesis of NADP. Catalyzes specifically the phosphorylation on 2'-hydroxyl of the adenosine moiety of NAD to yield NADP. The polypeptide is NAD kinase (Salmonella agona (strain SL483)).